Consider the following 318-residue polypeptide: DNA repair nuclease/redox regulator APEX1 (318 aa).

The tract at residues 1 to 33 is necessary for interaction with YBX1, binding to RNA, association together with NPM1 to rRNA, endoribonuclease activity on abasic RNA and localization in the nucleoli; sequence MPKRGKKGAVAEDGDELRTEPEAKKSKTAAKKN. Residues 1–60 are disordered; sequence MPKRGKKGAVAEDGDELRTEPEAKKSKTAAKKNDKEAAGEGPALYEDPPDQKTSPSGKPA. Residues K6 and K7 each carry the N6-acetyllysine; by EP300 modification. Positions 8-13 match the Nuclear localization signal (NLS) motif; sequence GAVAED. The span at 16-38 shows a compositional bias: basic and acidic residues; the sequence is ELRTEPEAKKSKTAAKKNDKEAA. The necessary for interaction with NPM1 and for efficient rRNA binding stretch occupies residues 23–33; it reads AKKSKTAAKKN. Residues K27, K31, K32, and K35 each carry the N6-acetyllysine modification. S54 carries the post-translational modification Phosphoserine. A Nuclear export signal (NES) motif is present at residues 64–80; that stretch reads ICSWNVDGLRAWIKKKG. C65 bears the S-nitrosocysteine; alternate mark. The cysteines at positions 65 and 93 are disulfide-linked. D70 is a Mg(2+) binding site. Position 93 is an S-nitrosocysteine; alternate (C93). E96 lines the Mg(2+) pocket. Y171 is a catalytic residue. An N6-acetyllysine modification is found at K197. Residues D210 and N212 each coordinate Mg(2+). The active-site Proton donor/acceptor is the D210. Residue T233 is modified to Phosphothreonine; by CDK5. The interval 289-318 is mitochondrial targeting sequence (MTS); the sequence is HSLLPALCDSKIRSKALGSDHCPITLYLAL. Residue D308 participates in Mg(2+) binding. Residue C310 is modified to S-nitrosocysteine.

The protein belongs to the DNA repair enzymes AP/ExoA family. Monomer. Homodimer; disulfide-linked. Component of the SET complex, composed of at least APEX1, SET, ANP32A, HMGB2, NME1 and TREX1. Associates with the dimer XRCC5/XRCC6 in a DNA-dependent manner. Interacts with SIRT1; the interaction is increased in the context of genotoxic stress. Interacts with HDAC1, HDAC2 and HDAC3; the interactions are not dependent on the APEX1 acetylation status. Interacts with XRCC1; the interaction is induced by SIRT1 and increased with the APEX1 acetylated form. Interacts with NPM1 (via N-terminal domain); the interaction is RNA-dependent and decreases in hydrogen peroxide-damaged cells. Interacts (via N-terminus) with YBX1 (via C-terminus); the interaction is increased in presence of APEX1 acetylated at Lys-6 and Lys-7. Interacts with HNRNPL; the interaction is DNA-dependent. Interacts (via N-terminus) with KPNA1 and KPNA2. Interacts with TXN; the interaction stimulates the FOS/JUN AP-1 complex DNA-binding activity in a redox-dependent manner. Interacts with GZMA, KRT8, MDM2, POLB, PRDX6, PRPF19, RPLP0, TOMM20 and WDR77. Binds to CDK5. Mg(2+) is required as a cofactor. It depends on Mn(2+) as a cofactor. Post-translationally, phosphorylated. Phosphorylation by kinase PKC or casein kinase CK2 results in enhanced redox activity that stimulates binding of the FOS/JUN AP-1 complex to its cognate binding site. AP-endodeoxyribonuclease activity is not affected by CK2-mediated phosphorylation. Phosphorylation of Thr-233 by CDK5 in response to MPP(+)/MPTP (1-methyl-4-phenylpyridinium) reduces AP-endodeoxyribonuclease activity resulting in accumulation of DNA damage and contributing to neuronal death. Acetylated on Lys-6 and Lys-7. Acetylation is increased by the transcriptional coactivator EP300 acetyltransferase, genotoxic agents like H(2)O(2) and methyl methanesulfonate (MMS). Acetylation increases its binding affinity to the negative calcium response element (nCaRE) DNA promoter. The acetylated form induces a stronger binding of YBX1 to the Y-box sequence in the MDR1 promoter than the unacetylated form. Deacetylated on lysines. Lys-6 and Lys-7 are deacetylated by SIRT1. In terms of processing, cleaved at Lys-31 by granzyme A to create the mitochondrial form; leading in reduction of binding to DNA, AP endodeoxyribonuclease activity, redox activation of transcription factors and to enhanced cell death. Cleaved by granzyme K; leading to intracellular ROS accumulation and enhanced cell death after oxidative stress. Post-translationally, cys-69 and Cys-93 are nitrosylated in response to nitric oxide (NO) and lead to the exposure of the nuclear export signal (NES). Ubiquitinated by MDM2; leading to translocation to the cytoplasm and proteasomal degradation.

The protein resides in the nucleus. Its subcellular location is the nucleolus. It is found in the nucleus speckle. The protein localises to the endoplasmic reticulum. It localises to the cytoplasm. The protein resides in the mitochondrion. The enzyme catalyses a deoxyribonucleotide-2'-deoxyribose-5'-monophosphate-DNA + H2O = a 5'-end 2'-deoxyribose-5'-monophosphate-DNA + a 3'-end 2'-deoxyribonucleotide-DNA + H(+). It carries out the reaction Exonucleolytic cleavage in the 3'- to 5'-direction to yield nucleoside 5'-phosphates.. It catalyses the reaction a 3'-end 2'-deoxyribonucleotide-3'-phosphoglycolate-DNA + H2O = 2-phosphoglycolate + a 3'-end 2'-deoxyribonucleotide-DNA + H(+). The catalysed reaction is a 3'-end 2'-deoxyribonucleotide-8-oxoguanine-DNA + H2O = 8-oxo-dGMP + a 3'-end 2'-deoxyribonucleotide-DNA + H(+). With respect to regulation, NPM1 stimulates endodeoxyribonuclease activity on double-stranded DNA with AP sites, but inhibits endoribonuclease activity on single-stranded RNA containing AP sites. Multifunctional protein that plays a central role in the cellular response to oxidative stress. The two major activities of APEX1 are DNA repair and redox regulation of transcriptional factors. Functions as an apurinic/apyrimidinic (AP) endodeoxyribonuclease in the base excision repair (BER) pathway of DNA lesions induced by oxidative and alkylating agents. Initiates repair of AP sites in DNA by catalyzing hydrolytic incision of the phosphodiester backbone immediately adjacent to the damage, generating a single-strand break with 5'-deoxyribose phosphate and 3'-hydroxyl ends. Also incises at AP sites in the DNA strand of DNA/RNA hybrids, single-stranded DNA regions of R-loop structures, and single-stranded RNA molecules. Operates at switch sites of immunoglobulin (Ig) constant regions where it mediates Ig isotype class switch recombination. Processes AP sites induced by successive action of AICDA and UNG. Generates staggered nicks in opposite DNA strands resulting in the formation of double-strand DNA breaks that are finally resolved via non-homologous end joining repair pathway. Has 3'-5' exodeoxyribonuclease activity on mismatched deoxyribonucleotides at the 3' termini of nicked or gapped DNA molecules during short-patch BER. Possesses DNA 3' phosphodiesterase activity capable of removing lesions (such as phosphoglycolate and 8-oxoguanine) blocking the 3' side of DNA strand breaks. Also acts as an endoribonuclease involved in the control of single-stranded RNA metabolism. Plays a role in regulating MYC mRNA turnover by preferentially cleaving in between UA and CA dinucleotides of the MYC coding region determinant (CRD). In association with NMD1, plays a role in the rRNA quality control process during cell cycle progression. Acts as a loading factor for POLB onto non-incised AP sites in DNA and stimulates the 5'-terminal deoxyribose 5'-phosphate (dRp) excision activity of POLB. Exerts reversible nuclear redox activity to regulate DNA binding affinity and transcriptional activity of transcriptional factors by controlling the redox status of their DNA-binding domain, such as the FOS/JUN AP-1 complex after exposure to IR. Involved in calcium-dependent down-regulation of parathyroid hormone (PTH) expression by binding to negative calcium response elements (nCaREs). Together with HNRNPL or the dimer XRCC5/XRCC6, associates with nCaRE, acting as an activator of transcriptional repression. May also play a role in the epigenetic regulation of gene expression by participating in DNA demethylation. Stimulates the YBX1-mediated MDR1 promoter activity, when acetylated at Lys-6 and Lys-7, leading to drug resistance. Plays a role in protection from granzyme-mediated cellular repair leading to cell death. Binds DNA and RNA. Associates, together with YBX1, on the MDR1 promoter. Together with NPM1, associates with rRNA. This Pan paniscus (Pygmy chimpanzee) protein is DNA repair nuclease/redox regulator APEX1 (APEX1).